Consider the following 106-residue polypeptide: Large ribosomal subunit protein bL21 (106 aa).

This sequence belongs to the bacterial ribosomal protein bL21 family. Part of the 50S ribosomal subunit. Contacts protein L20.

This protein binds to 23S rRNA in the presence of protein L20. In Streptomyces coelicolor (strain ATCC BAA-471 / A3(2) / M145), this protein is Large ribosomal subunit protein bL21.